A 374-amino-acid polypeptide reads, in one-letter code: uncharacterized protein (374 aa).

A disordered region spans residues 1–46; sequence MVNEEEKDLTAEGDSNNTGVSPDSIKNKTLDFYPKEKTTERKTRSR. Positions 25–46 are enriched in basic and acidic residues; the sequence is IKNKTLDFYPKEKTTERKTRSR. 6 helical membrane passes run 70-90, 127-147, 153-173, 199-219, 242-262, and 312-332; these read YAYI…FIAA, WVFY…KIGI, TIVY…IPVI, IWLF…YGLV, ISIA…MLAI, and YFFG…AITI.

The protein to M.genitalium MG432 and MG443.

It is found in the cell membrane. This is an uncharacterized protein from Spiroplasma citri.